The sequence spans 271 residues: Putative pyruvate, phosphate dikinase regulatory protein (271 aa).

151-158 (GISRTSKT) lines the ADP pocket.

This sequence belongs to the pyruvate, phosphate/water dikinase regulatory protein family. PDRP subfamily.

The enzyme catalyses N(tele)-phospho-L-histidyl/L-threonyl-[pyruvate, phosphate dikinase] + ADP = N(tele)-phospho-L-histidyl/O-phospho-L-threonyl-[pyruvate, phosphate dikinase] + AMP + H(+). It catalyses the reaction N(tele)-phospho-L-histidyl/O-phospho-L-threonyl-[pyruvate, phosphate dikinase] + phosphate + H(+) = N(tele)-phospho-L-histidyl/L-threonyl-[pyruvate, phosphate dikinase] + diphosphate. Its function is as follows. Bifunctional serine/threonine kinase and phosphorylase involved in the regulation of the pyruvate, phosphate dikinase (PPDK) by catalyzing its phosphorylation/dephosphorylation. The polypeptide is Putative pyruvate, phosphate dikinase regulatory protein (Streptococcus uberis (strain ATCC BAA-854 / 0140J)).